A 159-amino-acid polypeptide reads, in one-letter code: L-alanine exporter AlaE (159 aa).

4 consecutive transmembrane segments (helical) span residues 17 to 37 (FAMV…VSGM), 48 to 68 (LSIP…DYLL), 86 to 106 (MVAY…AVGA), and 110 to 130 (QIIT…IVYG).

This sequence belongs to the AlaE exporter family.

It is found in the cell inner membrane. Functionally, exports L-alanine. This Photobacterium profundum (strain SS9) protein is L-alanine exporter AlaE.